Here is a 258-residue protein sequence, read N- to C-terminus: Probable S-methyl-5'-thioinosine phosphorylase (258 aa).

Position 53 to 54 (53 to 54 (RH)) interacts with phosphate. Methionine 180 contributes to the substrate binding site. A phosphate-binding site is contributed by threonine 181. 204–206 (NQA) provides a ligand contact to substrate.

The protein belongs to the PNP/MTAP phosphorylase family. MTAP subfamily. As to quaternary structure, homotrimer.

It catalyses the reaction S-methyl-5'-thioinosine + phosphate = 5-(methylsulfanyl)-alpha-D-ribose 1-phosphate + hypoxanthine. Its pathway is purine metabolism; purine nucleoside salvage. In terms of biological role, catalyzes the reversible phosphorylation of S-methyl-5'-thioinosine (MTI) to hypoxanthine and 5-methylthioribose-1-phosphate. Involved in the breakdown of S-methyl-5'-thioadenosine (MTA), a major by-product of polyamine biosynthesis. Catabolism of (MTA) occurs via deamination to MTI and phosphorolysis to hypoxanthine. The protein is Probable S-methyl-5'-thioinosine phosphorylase of Methanosarcina acetivorans (strain ATCC 35395 / DSM 2834 / JCM 12185 / C2A).